The sequence spans 471 residues: RNA N(6)-adenosine-methyltransferase mettl16 (471 aa).

Positions 17-20 (PPDF) are RNA-binding. S-adenosyl-L-methionine-binding residues include Arg82, Gly106, Ser110, Glu129, Thr160, and Asn179. The tract at residues 159 to 163 (KTLLM) is K-loop. RNA-binding stretches follow at residues 194–206 (SRNS…SSIN), 245–249 (GKKCS), and 272–278 (QGRTMRW). VCR stretches follow at residues 284–390 (FYDD…RAQE) and 421–470 (FLFK…VAKP). The interval 375–412 (RREQGRHLRELPRAQEPPSEETSVTEQQQQPDIPPESP) is disordered.

The protein belongs to the methyltransferase superfamily. METTL16/RlmF family.

Its subcellular location is the nucleus. The protein localises to the cytoplasm. It catalyses the reaction adenosine in U6 snRNA + S-adenosyl-L-methionine = N(6)-methyladenosine in U6 snRNA + S-adenosyl-L-homocysteine + H(+). The enzyme catalyses an adenosine in mRNA + S-adenosyl-L-methionine = an N(6)-methyladenosine in mRNA + S-adenosyl-L-homocysteine + H(+). Its activity is regulated as follows. Methyltransferase activity is autoinhibited by the K-loop region that blocks S-adenosyl-L-methionine-binding. Upon activation, K-loop changes conformation, allowing S-adenosyl-L-methionine-binding and subsequent methyltransferase activity. mRNA N6-adenosine-methyltransferase activity is inhibited by zinc. Its function is as follows. RNA N6-methyltransferase that methylates adenosine residues at the N(6) position of a subset of RNAs and is involved in S-adenosyl-L-methionine homeostasis by regulating expression of MAT2A transcripts. Able to N6-methylate a subset of mRNAs and U6 small nuclear RNAs (U6 snRNAs). In contrast to the METTL3-METTL14 heterodimer, only able to methylate a limited number of RNAs: requires both a 5'UACAGAGAA-3' nonamer sequence and a specific RNA structure. Plays a key role in S-adenosyl-L-methionine homeostasis by mediating N6-methylation of MAT2A mRNAs, altering splicing of MAT2A transcripts: in presence of S-adenosyl-L-methionine, binds the 3'-UTR region of MAT2A mRNA and specifically N6-methylates the first hairpin of MAT2A mRNA, impairing MAT2A splicing and protein expression. In S-adenosyl-L-methionine-limiting conditions, binds the 3'-UTR region of MAT2A mRNA but stalls due to the lack of a methyl donor, preventing N6-methylation and promoting expression of MAT2A. In addition to mRNAs, also able to mediate N6-methylation of U6 small nuclear RNA (U6 snRNA): specifically N6-methylates adenine in position 43 of U6 snRNAs. This Danio rerio (Zebrafish) protein is RNA N(6)-adenosine-methyltransferase mettl16 (mettl16).